We begin with the raw amino-acid sequence, 134 residues long: Small ribosomal subunit protein uS8c (134 aa).

The protein belongs to the universal ribosomal protein uS8 family. In terms of assembly, part of the 30S ribosomal subunit.

It localises to the plastid. It is found in the chloroplast. One of the primary rRNA binding proteins, it binds directly to 16S rRNA central domain where it helps coordinate assembly of the platform of the 30S subunit. In Aethionema cordifolium (Lebanon stonecress), this protein is Small ribosomal subunit protein uS8c (rps8).